The primary structure comprises 81 residues: Beta-catenin-interacting protein 1 (81 aa).

S59 carries the phosphoserine modification.

Belongs to the CTNNBIP1 family. As to quaternary structure, binds CTNNB1. Highly expressed in heart, brain, liver and skeletal muscle. Detected at low levels in kidney, testis and lung.

The protein localises to the cytoplasm. It localises to the nucleus. Its function is as follows. Prevents the interaction between CTNNB1 and TCF family members, and acts as a negative regulator of the Wnt signaling pathway. This Mus musculus (Mouse) protein is Beta-catenin-interacting protein 1 (Ctnnbip1).